We begin with the raw amino-acid sequence, 376 residues long: Small RNA 2'-O-methyltransferase (376 aa).

Thr-49, Asp-67, and Ser-103 together coordinate S-adenosyl-L-methionine. Residues Glu-121, Glu-124, His-125, and His-171 each contribute to the Mg(2+) site.

This sequence belongs to the methyltransferase superfamily. HEN1 family. Requires Mg(2+) as cofactor.

Its subcellular location is the cytoplasm. It catalyses the reaction small RNA 3'-end nucleotide + S-adenosyl-L-methionine = small RNA 3'-end 2'-O-methylnucleotide + S-adenosyl-L-homocysteine + H(+). Methyltransferase that adds a 2'-O-methyl group at the 3'-end of piRNAs, a class of 24 to 30 nucleotide RNAs that are generated by a Dicer-independent mechanism and are primarily derived from transposons and other repeated sequence elements. This probably protects the 3'-end of piRNAs from uridylation activity and subsequent degradation. Stabilization of piRNAs is essential for gametogenesis. The polypeptide is Small RNA 2'-O-methyltransferase (HENMT1) (Gallus gallus (Chicken)).